The following is a 206-amino-acid chain: Small ribosomal subunit protein eS1 (206 aa).

Belongs to the eukaryotic ribosomal protein eS1 family.

This Halobacterium salinarum (strain ATCC 29341 / DSM 671 / R1) protein is Small ribosomal subunit protein eS1.